Here is a 1366-residue protein sequence, read N- to C-terminus: DNA-directed RNA polymerase subunit beta' (1366 aa).

A disordered region spans residues Met-1–Arg-40. Residues Lys-7–Lys-24 are compositionally biased toward basic residues. A compositionally biased stretch (polar residues) spans Gln-25–Ser-38. Cys-250, Cys-317, Cys-324, and Cys-327 together coordinate Zn(2+). The segment at Thr-1299–Glu-1366 is disordered. Residues Ala-1353–Glu-1366 show a composition bias toward low complexity.

The protein belongs to the RNA polymerase beta' chain family. RpoC2 subfamily. In cyanobacteria the RNAP catalytic core is composed of 2 alpha, 1 beta, 1 beta', 1 gamma and 1 omega subunit. When a sigma factor is associated with the core the holoenzyme is formed, which can initiate transcription. Requires Zn(2+) as cofactor.

It catalyses the reaction RNA(n) + a ribonucleoside 5'-triphosphate = RNA(n+1) + diphosphate. Its function is as follows. DNA-dependent RNA polymerase catalyzes the transcription of DNA into RNA using the four ribonucleoside triphosphates as substrates. The sequence is that of DNA-directed RNA polymerase subunit beta' from Prochlorococcus marinus (strain MIT 9211).